The following is a 660-amino-acid chain: tRNA 5-methylaminomethyl-2-thiouridine biosynthesis bifunctional protein MnmC (660 aa).

The tRNA (mnm(5)s(2)U34)-methyltransferase stretch occupies residues 1–233 (MTHSHAQLVW…KRHISHGWIA (233 aa)). The tract at residues 260-660 (VGGGLAGAAS…IRRKLDPDAL (401 aa)) is FAD-dependent cmnm(5)s(2)U34 oxidoreductase.

The protein in the N-terminal section; belongs to the methyltransferase superfamily. tRNA (mnm(5)s(2)U34)-methyltransferase family. It in the C-terminal section; belongs to the DAO family. It depends on FAD as a cofactor.

The protein localises to the cytoplasm. It catalyses the reaction 5-aminomethyl-2-thiouridine(34) in tRNA + S-adenosyl-L-methionine = 5-methylaminomethyl-2-thiouridine(34) in tRNA + S-adenosyl-L-homocysteine + H(+). Its function is as follows. Catalyzes the last two steps in the biosynthesis of 5-methylaminomethyl-2-thiouridine (mnm(5)s(2)U) at the wobble position (U34) in tRNA. Catalyzes the FAD-dependent demodification of cmnm(5)s(2)U34 to nm(5)s(2)U34, followed by the transfer of a methyl group from S-adenosyl-L-methionine to nm(5)s(2)U34, to form mnm(5)s(2)U34. This chain is tRNA 5-methylaminomethyl-2-thiouridine biosynthesis bifunctional protein MnmC, found in Chromobacterium violaceum (strain ATCC 12472 / DSM 30191 / JCM 1249 / CCUG 213 / NBRC 12614 / NCIMB 9131 / NCTC 9757 / MK).